The chain runs to 415 residues: Tyrosine-protein phosphatase non-receptor type 2 (415 aa).

The Tyrosine-protein phosphatase domain maps to 5–275; that stretch reads IEREFEELDT…RFSYMAIIEG (271 aa). Y22 carries the post-translational modification Phosphotyrosine. S52 is subject to Phosphoserine. Y68 bears the Phosphotyrosine mark. Substrate contacts are provided by residues D182, 216–222, and Q260; that span reads CSAGIGR. C216 acts as the Phosphocysteine intermediate in catalysis. C216 carries the S-nitrosocysteine modification. Residues S293, S298, and S304 each carry the phosphoserine modification. Residues 346–415 are endoplasmic reticulum location; sequence ESALRKRIRE…WTLFFQQNAL (70 aa). The tract at residues 376-415 is mediates interaction with STX17; sequence ERKRKRWLYWQPILTKMGFMSVILVGAFVGWTLFFQQNAL.

It belongs to the protein-tyrosine phosphatase family. Non-receptor class 1 subfamily. In terms of assembly, interacts with RMDN3. Isoform 1 interacts with TMED9. Isoform 1 interacts with STX17; dephosphorylates STX17. Interacts with ITGA1 (via cytoplasmic domain); activates the phosphatase activity towards EGFR. Interacts with TRAF2; probably involved in tumor necrosis factor-mediated signaling. Interacts with MET. Interacts with FAM220A and STAT3; interaction with FAM220A promotes interaction of PTPN2 with transcriptional activator STAT3, leading to dephosphorylation of STAT3 by PTPN2 and negative regulation of STAT3 transcriptional activator activity. In terms of processing, specifically phosphorylated in a cell cycle-dependent manner by cyclin-dependent kinases CDK1 and CDK2. Probably activated through phosphorylation by PKR. As to expression, ubiquitously expressed. Isoform 2 is probably the major isoform. Isoform 1 is expressed in T-cells and in placenta.

The protein localises to the endoplasmic reticulum. It localises to the endoplasmic reticulum-Golgi intermediate compartment. Its subcellular location is the nucleus. It is found in the cytoplasm. The protein resides in the cell membrane. It catalyses the reaction O-phospho-L-tyrosyl-[protein] + H2O = L-tyrosyl-[protein] + phosphate. In terms of biological role, non-receptor type tyrosine-specific phosphatase that dephosphorylates receptor protein tyrosine kinases including INSR, EGFR, CSF1R, PDGFR. Also dephosphorylates non-receptor protein tyrosine kinases like JAK1, JAK2, JAK3, Src family kinases, STAT1, STAT3 and STAT6 either in the nucleus or the cytoplasm. Negatively regulates numerous signaling pathways and biological processes like hematopoiesis, inflammatory response, cell proliferation and differentiation, and glucose homeostasis. Plays a multifaceted and important role in the development of the immune system. Functions in T-cell receptor signaling through dephosphorylation of FYN and LCK to control T-cells differentiation and activation. Dephosphorylates CSF1R, negatively regulating its downstream signaling and macrophage differentiation. Negatively regulates cytokine (IL2/interleukin-2 and interferon)-mediated signaling through dephosphorylation of the cytoplasmic kinases JAK1, JAK3 and their substrate STAT1, that propagate signaling downstream of the cytokine receptors. Also regulates the IL6/interleukin-6 and IL4/interleukin-4 cytokine signaling through dephosphorylation of STAT3 and STAT6 respectively. In addition to the immune system, it is involved in anchorage-dependent, negative regulation of EGF-stimulated cell growth. Activated by the integrin ITGA1/ITGB1, it dephosphorylates EGFR and negatively regulates EGF signaling. Dephosphorylates PDGFRB and negatively regulates platelet-derived growth factor receptor-beta signaling pathway and therefore cell proliferation. Negatively regulates tumor necrosis factor-mediated signaling downstream via MAPK through SRC dephosphorylation. May also regulate the hepatocyte growth factor receptor signaling pathway through dephosphorylation of the hepatocyte growth factor receptor MET. Also plays an important role in glucose homeostasis. For instance, negatively regulates the insulin receptor signaling pathway through the dephosphorylation of INSR and control gluconeogenesis and liver glucose production through negative regulation of the IL6 signaling pathways. May also bind DNA. The sequence is that of Tyrosine-protein phosphatase non-receptor type 2 (PTPN2) from Homo sapiens (Human).